The following is a 95-amino-acid chain: Aspartyl/glutamyl-tRNA(Asn/Gln) amidotransferase subunit C (95 aa).

The protein belongs to the GatC family. As to quaternary structure, heterotrimer of A, B and C subunits.

The catalysed reaction is L-glutamyl-tRNA(Gln) + L-glutamine + ATP + H2O = L-glutaminyl-tRNA(Gln) + L-glutamate + ADP + phosphate + H(+). It catalyses the reaction L-aspartyl-tRNA(Asn) + L-glutamine + ATP + H2O = L-asparaginyl-tRNA(Asn) + L-glutamate + ADP + phosphate + 2 H(+). In terms of biological role, allows the formation of correctly charged Asn-tRNA(Asn) or Gln-tRNA(Gln) through the transamidation of misacylated Asp-tRNA(Asn) or Glu-tRNA(Gln) in organisms which lack either or both of asparaginyl-tRNA or glutaminyl-tRNA synthetases. The reaction takes place in the presence of glutamine and ATP through an activated phospho-Asp-tRNA(Asn) or phospho-Glu-tRNA(Gln). The chain is Aspartyl/glutamyl-tRNA(Asn/Gln) amidotransferase subunit C from Phenylobacterium zucineum (strain HLK1).